The sequence spans 101 residues: Apolipoprotein C-II (101 aa).

The N-terminal stretch at 1 to 22 is a signal peptide; sequence MGTRCLLVLLLVLLVLKCEVQG. Residues 23 to 28 constitute a propeptide, removed in mature form; the sequence is DDMARQ. Residues 66-74 are lipid binding; sequence AMDEKIRDM. Residues 78–101 are lipoprotein lipase cofactor; it reads STAAVRIYTGILTDQILSMLTGDP.

The protein belongs to the apolipoprotein C2 family. Post-translationally, proapolipoprotein C-II is synthesized as a sialic acid containing glycoprotein which is subsequently desialylated prior to its proteolytic processing. Proapolipoprotein C-II, the major form found in plasma undergoes proteolytic cleavage of its N-terminal hexapeptide to generate the mature form apolipoprotein C-II, which occurs as the minor form in plasma.

The protein resides in the secreted. Functionally, component of chylomicrons, very low-density lipoproteins (VLDL), low-density lipoproteins (LDL), and high-density lipoproteins (HDL) in plasma. Plays an important role in lipoprotein metabolism as an activator of lipoprotein lipase, the enzyme which hydrolyzes the triacylglycerols on chylomicrons and VLDL. The polypeptide is Apolipoprotein C-II (APOC2) (Panthera tigris altaica (Siberian tiger)).